Here is a 262-residue protein sequence, read N- to C-terminus: Acyl-[acyl-carrier-protein]--UDP-N-acetylglucosamine O-acyltransferase (262 aa).

This sequence belongs to the transferase hexapeptide repeat family. LpxA subfamily. In terms of assembly, homotrimer.

It localises to the cytoplasm. It carries out the reaction a (3R)-hydroxyacyl-[ACP] + UDP-N-acetyl-alpha-D-glucosamine = a UDP-3-O-[(3R)-3-hydroxyacyl]-N-acetyl-alpha-D-glucosamine + holo-[ACP]. It functions in the pathway glycolipid biosynthesis; lipid IV(A) biosynthesis; lipid IV(A) from (3R)-3-hydroxytetradecanoyl-[acyl-carrier-protein] and UDP-N-acetyl-alpha-D-glucosamine: step 1/6. Involved in the biosynthesis of lipid A, a phosphorylated glycolipid that anchors the lipopolysaccharide to the outer membrane of the cell. This Paraburkholderia xenovorans (strain LB400) protein is Acyl-[acyl-carrier-protein]--UDP-N-acetylglucosamine O-acyltransferase.